We begin with the raw amino-acid sequence, 150 residues long: UPF0756 membrane protein Asuc_1151 (150 aa).

4 consecutive transmembrane segments (helical) span residues 1-21, 52-72, 82-102, and 123-143; these read MSLH…LGVL, YGLN…IVAG, LLHW…WLAG, and ILGV…AGIL.

Belongs to the UPF0756 family.

It is found in the cell membrane. The chain is UPF0756 membrane protein Asuc_1151 from Actinobacillus succinogenes (strain ATCC 55618 / DSM 22257 / CCUG 43843 / 130Z).